Reading from the N-terminus, the 732-residue chain is Catalase-peroxidase (732 aa).

An N-terminal signal peptide occupies residues 1–15 (MSTESKCPFAGGAYA). A cross-link (tryptophyl-tyrosyl-methioninium (Trp-Tyr) (with M-245)) is located at residues 96–219 (WHSAGTYRIY…LGAVQMGLIY (124 aa)). The active-site Proton acceptor is the histidine 97. A cross-link (tryptophyl-tyrosyl-methioninium (Tyr-Met) (with W-96)) is located at residues 219–245 (YVNPEGPNGNPDPLASARDIRETFARM). Heme b is bound at residue histidine 260.

The protein belongs to the peroxidase family. Peroxidase/catalase subfamily. In terms of assembly, homodimer or homotetramer. Requires heme b as cofactor. Formation of the three residue Trp-Tyr-Met cross-link is important for the catalase, but not the peroxidase activity of the enzyme.

It carries out the reaction H2O2 + AH2 = A + 2 H2O. It catalyses the reaction 2 H2O2 = O2 + 2 H2O. Bifunctional enzyme with both catalase and broad-spectrum peroxidase activity. This Acidobacterium capsulatum (strain ATCC 51196 / DSM 11244 / BCRC 80197 / JCM 7670 / NBRC 15755 / NCIMB 13165 / 161) protein is Catalase-peroxidase.